The chain runs to 658 residues: uncharacterized protein (658 aa).

Over residues 516 to 639 (SSNNSNSSNN…NNNNNSSQGG (124 aa)) the composition is skewed to low complexity. Residues 516–646 (SSNNSNSSNN…QGGNSQGGSG (131 aa)) are disordered.

It localises to the cytoplasm. This is an uncharacterized protein from Schizosaccharomyces pombe (strain 972 / ATCC 24843) (Fission yeast).